Consider the following 257-residue polypeptide: tRNA (guanine-N(7)-)-methyltransferase (257 aa).

Residues 1 to 12 (MARDSEDQDMET) show a composition bias toward acidic residues. The disordered stretch occupies residues 1 to 25 (MARDSEDQDMETETNGAAEGLDPTS). S-adenosyl-L-methionine-binding positions include G80, 103–104 (EI), 138–139 (NA), and L158. Residue D161 is part of the active site. 236 to 238 (SEE) provides a ligand contact to S-adenosyl-L-methionine.

The protein belongs to the class I-like SAM-binding methyltransferase superfamily. TrmB family.

The protein resides in the nucleus. The catalysed reaction is guanosine(46) in tRNA + S-adenosyl-L-methionine = N(7)-methylguanosine(46) in tRNA + S-adenosyl-L-homocysteine. It functions in the pathway tRNA modification; N(7)-methylguanine-tRNA biosynthesis. In terms of biological role, catalyzes the formation of N(7)-methylguanine at position 46 (m7G46) in tRNA. The protein is tRNA (guanine-N(7)-)-methyltransferase of Drosophila ananassae (Fruit fly).